The primary structure comprises 1029 residues: Toll-like receptor 9 (1029 aa).

The N-terminal stretch at 1-24 (MGPYCAPHPLSLLVQAAALAAALA) is a signal peptide. Residues 25–815 (QGTLPAFLPC…LCLDETLSLD (791 aa)) are Extracellular-facing. A disulfide bridge connects residues Cys-34 and Cys-44. Position 46 to 50 (46 to 50 (WLFLK)) interacts with DNA. LRR repeat units lie at residues 61 to 84 (RANV…DFVH), 86 to 109 (SNLR…HFPC), 121 to 146 (VPTL…SLVS), 149 to 165 (LSRT…FTGL), 166 to 189 (HALR…AVEV), 197 to 220 (LGNL…LPPS), 222 to 241 (DTLL…DLAN), 242 to 267 (LTAL…CREC), 282 to 305 (LSRL…WFRG), 307 to 331 (GRLQ…IFRN), 332 to 355 (LTQL…HLQL), 362 to 385 (LVSL…TLRP), 389 to 412 (LPKL…IFGA), 414 to 439 (PSLL…LGEV), 469 to 492 (CNLN…MFTR), 494 to 517 (SRLQ…QFVP), 518 to 541 (LTRL…SFTE), 543 to 570 (PQLE…SFVA), 572 to 596 (LPSL…LSSA), 598 to 620 (LRAL…LYLC), 625 to 648 (LRNL…HLDN), 650 to 673 (PKSL…SLTV), 674 to 697 (LPQL…SLPP), 699 to 721 (TRLQ…FFVL), 722 to 745 (ANRL…WFGR), and 747 to 770 (TETL…AFVD). N-linked (GlcNAc...) asparagine glycosylation is present at Asn-63. DNA contacts are provided by residues 71-76 (SNRIHH) and 94-108 (KWNC…MHFP). The cysteines at positions 97 and 109 are disulfide-linked. The N-linked (GlcNAc...) asparagine glycan is linked to Asn-128. Residues Tyr-131, Arg-151, and 178–180 (YYK) each bind DNA. Cys-177 and Cys-183 are joined by a disulfide. Asn-199 carries an N-linked (GlcNAc...) asparagine glycan. Tyr-207 serves as a coordination point for DNA. N-linked (GlcNAc...) asparagine glycans are attached at residues Asn-209 and Asn-241. 2 disulfide bridges follow: Cys-254/Cys-267 and Cys-257/Cys-264. Residue Cys-257 is the site of S-palmitoyl cysteine attachment. Arg-261 provides a ligand contact to DNA. Cys-264 carries S-palmitoyl cysteine lipidation. N-linked (GlcNAc...) asparagine glycosylation is found at Asn-331, Asn-339, and Asn-380. Cys-469 and Cys-498 are oxidised to a cystine. 2 N-linked (GlcNAc...) asparagine glycosylation sites follow: Asn-472 and Asn-511. Asn-565 carries N-linked (GlcNAc...) asparagine glycosylation. Asn-667 and Asn-692 each carry an N-linked (GlcNAc...) asparagine glycan. A glycan (N-linked (GlcNAc...) asparagine) is linked at Asn-729. Cystine bridges form between Cys-762–Cys-788 and Cys-764–Cys-807. A helical membrane pass occupies residues 816 to 836 (CFGFSLLMVALGLAVPMLHHL). Residues 837 to 1029 (CGWDLWYCFH…NFCRGPTTAE (193 aa)) lie on the Cytoplasmic side of the membrane. Residues 864-1009 (LLYDAFVVFD…SFWANLGMAL (146 aa)) form the TIR domain.

It belongs to the Toll-like receptor family. As to quaternary structure, monomer and homodimer. Exists as a monomer in the absence of unmethylated cytidine-phosphate-guanosine (CpG) ligand. Proteolytic processing of an insertion loop (Z-loop) is required for homodimerization upon binding to the unmethylated CpG ligand leading to its activation. Interacts with MYD88 via their respective TIR domains. Interacts with BTK. Interacts (via transmembrane domain) with UNC93B1. Interacts with CD300LH; the interaction may promote full activation of TLR9-triggered innate responses. Interacts with CNPY3 and HSP90B1; this interaction is required for proper folding in the endoplasmic reticulum. Interacts with SMPDL3B. Interacts with CD82; this interaction is essential for TLR9-dependent myddosome formation in response to CpG stimulation. In terms of processing, activated by proteolytic cleavage of the flexible loop between repeats LRR14 and LRR15 within the ectodomain. Cleavage requires UNC93B1. Proteolytically processed by first removing the majority of the ectodomain by either asparagine endopeptidase (AEP) or a cathepsin followed by a trimming event that is solely cathepsin mediated and required for optimal receptor signaling. Palmitoylated by ZDHHC3 in the Golgi regulates TLR9 trafficking from the Golgi to endosomes. Depalmitoylation by PPT1 controls the release of TLR9 from UNC93B1 in endosomes.

It localises to the endoplasmic reticulum membrane. The protein resides in the endosome. The protein localises to the lysosome. Its subcellular location is the cytoplasmic vesicle. It is found in the phagosome. In terms of biological role, key component of innate and adaptive immunity. TLRs (Toll-like receptors) control host immune response against pathogens through recognition of molecular patterns specific to microorganisms. TLR9 is a nucleotide-sensing TLR which is activated by unmethylated cytidine-phosphate-guanosine (CpG) dinucleotides. Acts via MYD88 and TRAF6, leading to NF-kappa-B activation, cytokine secretion and the inflammatory response. Upon CpG stimulation, induces B-cell proliferation, activation, survival and antibody production. In Ovis aries (Sheep), this protein is Toll-like receptor 9 (TLR9).